We begin with the raw amino-acid sequence, 274 residues long: Shikimate dehydrogenase (NADP(+)) (274 aa).

Shikimate-binding positions include 14 to 16 and T61; that span reads SQS. K65 functions as the Proton acceptor in the catalytic mechanism. Positions 86 and 102 each coordinate shikimate. NADP(+) contacts are provided by residues 128-132, 151-156, and L215; these read GAGGA and NRTVEK. A shikimate-binding site is contributed by Y217. NADP(+) is bound at residue G239.

This sequence belongs to the shikimate dehydrogenase family. Homodimer.

The catalysed reaction is shikimate + NADP(+) = 3-dehydroshikimate + NADPH + H(+). Its pathway is metabolic intermediate biosynthesis; chorismate biosynthesis; chorismate from D-erythrose 4-phosphate and phosphoenolpyruvate: step 4/7. In terms of biological role, involved in the biosynthesis of the chorismate, which leads to the biosynthesis of aromatic amino acids. Catalyzes the reversible NADPH linked reduction of 3-dehydroshikimate (DHSA) to yield shikimate (SA). The polypeptide is Shikimate dehydrogenase (NADP(+)) (Proteus mirabilis (strain HI4320)).